A 553-amino-acid polypeptide reads, in one-letter code: Putative transport protein YidE (553 aa).

5 helical membrane-spanning segments follow: residues isoleucine 4–valine 24, glycine 28–serine 48, phenylalanine 65–serine 85, leucine 95–phenylalanine 115, and methionine 158–leucine 178. 2 consecutive RCK C-terminal domains span residues glutamine 191–glutamine 276 and aspartate 279–asparagine 361. Transmembrane regions (helical) follow at residues methionine 371–valine 391, glycine 393–leucine 413, isoleucine 439–valine 459, leucine 464–leucine 484, tyrosine 493–alanine 513, and leucine 533–glycine 553.

It belongs to the AAE transporter (TC 2.A.81) family. YidE subfamily.

It is found in the cell membrane. This Escherichia coli (strain ATCC 8739 / DSM 1576 / NBRC 3972 / NCIMB 8545 / WDCM 00012 / Crooks) protein is Putative transport protein YidE.